The following is a 230-amino-acid chain: Complex I assembly factor TMEM126B, mitochondrial (230 aa).

S34 is subject to Phosphoserine. 4 helical membrane passes run 72-92 (IYQMATFGTTAGFSGIFSNFL), 110-130 (LATLPFLSTVVTDKLFVIDAL), 141-161 (VFRSSLIGIVCGVFYPSSLAF), and 199-219 (IPLVFQIMFGILNGLYHYAVF).

It belongs to the TMEM126 family. As to quaternary structure, part of the mitochondrial complex I assembly/MCIA complex that comprises at least the core subunits TMEM126B, NDUFAF1, ECSIT and ACAD9 and complement subunits such as COA1 and TMEM186. Associates with the intermediate 370 kDa subcomplex of incompletely assembled complex I. Interacts with TMEM70.

The protein resides in the mitochondrion membrane. In terms of biological role, as part of the MCIA complex, involved in the assembly of the mitochondrial complex I. Participates in constructing the membrane arm of complex I. The protein is Complex I assembly factor TMEM126B, mitochondrial of Homo sapiens (Human).